The following is a 336-amino-acid chain: Phenylalanine--tRNA ligase alpha subunit (336 aa).

Glutamate 259 lines the Mg(2+) pocket.

It belongs to the class-II aminoacyl-tRNA synthetase family. Phe-tRNA synthetase alpha subunit type 1 subfamily. As to quaternary structure, tetramer of two alpha and two beta subunits. Requires Mg(2+) as cofactor.

Its subcellular location is the cytoplasm. It carries out the reaction tRNA(Phe) + L-phenylalanine + ATP = L-phenylalanyl-tRNA(Phe) + AMP + diphosphate + H(+). The polypeptide is Phenylalanine--tRNA ligase alpha subunit (Tropheryma whipplei (strain TW08/27) (Whipple's bacillus)).